The sequence spans 112 residues: uncharacterized protein (112 aa).

This is an uncharacterized protein from Methanocaldococcus jannaschii (strain ATCC 43067 / DSM 2661 / JAL-1 / JCM 10045 / NBRC 100440) (Methanococcus jannaschii).